The chain runs to 428 residues: Dihydroorotase (428 aa).

Zn(2+)-binding residues include H59 and H61. Residues 61-63 and N93 each bind substrate; that span reads HLR. Positions 151, 178, and 231 each coordinate Zn(2+). Residue N277 coordinates substrate. D304 contacts Zn(2+). D304 is an active-site residue. Residues H308 and 322–323 each bind substrate; that span reads FG.

It belongs to the metallo-dependent hydrolases superfamily. DHOase family. Class I DHOase subfamily. Zn(2+) is required as a cofactor.

It carries out the reaction (S)-dihydroorotate + H2O = N-carbamoyl-L-aspartate + H(+). It functions in the pathway pyrimidine metabolism; UMP biosynthesis via de novo pathway; (S)-dihydroorotate from bicarbonate: step 3/3. Catalyzes the reversible cyclization of carbamoyl aspartate to dihydroorotate. In Bacillus anthracis (strain A0248), this protein is Dihydroorotase.